Consider the following 105-residue polypeptide: MDEILIKLEQILEQRKSAKADKSYVSSLYNKGTDEILKKISEESAEVIMATKDGSNDKIIYEIADLWFHTLVLLRFKKIKVEQITNELSRRFGLSGLKEKANRNN.

Belongs to the PRA-PH family.

It is found in the cytoplasm. The catalysed reaction is 1-(5-phospho-beta-D-ribosyl)-ATP + H2O = 1-(5-phospho-beta-D-ribosyl)-5'-AMP + diphosphate + H(+). It functions in the pathway amino-acid biosynthesis; L-histidine biosynthesis; L-histidine from 5-phospho-alpha-D-ribose 1-diphosphate: step 2/9. This Vesicomyosocius okutanii subsp. Calyptogena okutanii (strain HA) protein is Phosphoribosyl-ATP pyrophosphatase.